Reading from the N-terminus, the 1380-residue chain is DNA-directed RNA polymerase subunit beta (1380 aa).

It belongs to the RNA polymerase beta chain family. As to quaternary structure, the RNAP catalytic core consists of 2 alpha, 1 beta, 1 beta' and 1 omega subunit. When a sigma factor is associated with the core the holoenzyme is formed, which can initiate transcription.

The enzyme catalyses RNA(n) + a ribonucleoside 5'-triphosphate = RNA(n+1) + diphosphate. DNA-dependent RNA polymerase catalyzes the transcription of DNA into RNA using the four ribonucleoside triphosphates as substrates. This is DNA-directed RNA polymerase subunit beta from Ehrlichia ruminantium (strain Welgevonden).